The sequence spans 34 residues: U1-poneritoxin-Na2a (34 aa).

As to expression, expressed by the venom gland.

It localises to the secreted. In terms of biological role, may have antimicrobial properties, like most ant linear peptides. The protein is U1-poneritoxin-Na2a of Neoponera apicalis (Ant).